Reading from the N-terminus, the 502-residue chain is MRKGQGYSYSVIASVLVLLCVVVSRIECSSQVHALSRLYLSKRGVGGSSTMDTSHFKAVKDLKPSSLRSAANQEGLRKRDLIRRLPGQPPVSFDQYGGYVTVNESAGRSFFYYFVEASKSKDSSPLLLWLNGGPGCSSLAYGALQELGPFRVHSDGKTLFRNRYAWNNAANVLFLESPAGVGFSYTNTTSDLEKHGDRNTAADNYIFLVNWLERFPEYKGRDLYIAGESYAGHYVPQLAHTILLHHRSFFNLKGILIGNAVINDETDLMGMYDFFESHALISEDSLARLKSNCDLKTESASVMTEECAVVSDQIDMDTYYLDIYNIYAPLCLNSTLTRRPKRGTTIREFDPCSDHYVQAYLNRPEVQAALHANATKLPYEWQPCSSVIKKWNDSPTTVIPLIKELMGQGVRVWVFSGDTDGRIPVTSTKYSLKKMNLTAKTAWHPWYLGGEVGGYTEEYKGKLTFATVRGAGHQVPSFQPKRSLSLFIHFLNDTPLPDTSRY.

The N-terminal stretch at 1–24 is a signal peptide; it reads MRKGQGYSYSVIASVLVLLCVVVS. N103 and N187 each carry an N-linked (GlcNAc...) asparagine glycan. Disulfide bonds link C136/C384, C293/C307, and C331/C352. The active site involves S229. N-linked (GlcNAc...) asparagine glycosylation is found at N333 and N373. D420 is a catalytic residue. N436 is a glycosylation site (N-linked (GlcNAc...) asparagine). H473 is a catalytic residue.

It belongs to the peptidase S10 family. In terms of tissue distribution, expressed in roots, leaves, flowers and siliques.

Its subcellular location is the secreted. Its function is as follows. Probable carboxypeptidase. This Arabidopsis thaliana (Mouse-ear cress) protein is Serine carboxypeptidase-like 40 (SCPL40).